Consider the following 686-residue polypeptide: Acyl-CoA synthetase short-chain family member 3, mitochondrial (686 aa).

A mitochondrion-targeting transit peptide spans 1-29 (MKPSWLQCRKVTGAGGLGGSLPASSPARG). 226 to 229 (EPGR) is a CoA binding site. Residues 424 to 426 (GER) and 445 to 450 (DHWWQT) contribute to the ATP site. K517 is modified (N6-succinyllysine). The residue at position 523 (K523) is an N6-acetyllysine. D538, R553, and R564 together coordinate ATP. R623 is a binding site for CoA.

This sequence belongs to the ATP-dependent AMP-binding enzyme family.

Its subcellular location is the mitochondrion matrix. It catalyses the reaction acetate + ATP + CoA = acetyl-CoA + AMP + diphosphate. The catalysed reaction is propanoate + ATP + CoA = propanoyl-CoA + AMP + diphosphate. It carries out the reaction butanoate + ATP + CoA = butanoyl-CoA + AMP + diphosphate. Its function is as follows. Catalyzes the synthesis of acetyl-CoA from short-chain fatty acids. Propionate is the preferred substrate but can also utilize acetate and butyrate with a much lower affinity. This Bos taurus (Bovine) protein is Acyl-CoA synthetase short-chain family member 3, mitochondrial (ACSS3).